A 427-amino-acid polypeptide reads, in one-letter code: Enolase (427 aa).

A (2R)-2-phosphoglycerate-binding site is contributed by glutamine 163. The active-site Proton donor is glutamate 205. Aspartate 242, glutamate 285, and aspartate 312 together coordinate Mg(2+). The (2R)-2-phosphoglycerate site is built by lysine 337, arginine 366, serine 367, and lysine 388. The active-site Proton acceptor is lysine 337.

Belongs to the enolase family. Requires Mg(2+) as cofactor.

The protein localises to the cytoplasm. It is found in the secreted. Its subcellular location is the cell surface. The catalysed reaction is (2R)-2-phosphoglycerate = phosphoenolpyruvate + H2O. It functions in the pathway carbohydrate degradation; glycolysis; pyruvate from D-glyceraldehyde 3-phosphate: step 4/5. Catalyzes the reversible conversion of 2-phosphoglycerate (2-PG) into phosphoenolpyruvate (PEP). It is essential for the degradation of carbohydrates via glycolysis. The chain is Enolase from Variovorax paradoxus (strain S110).